A 185-amino-acid chain; its full sequence is uncharacterized protein (185 aa).

Positions 1–24 (MPCNRAVFGAFVLALLISLQSVYF) are cleaved as a signal peptide. Residues 50 to 70 (VAVNVIVEFSFDILFFLCGLL) traverse the membrane as a helical segment. Basic and acidic residues predominate over residues 96–113 (ELEHVSSRRRNDSRDDST). The segment at 96-185 (ELEHVSSRRR…LFTAGGIGLP (90 aa)) is disordered. Positions 114 to 126 (VRNVSKTSPLASQ) are enriched in polar residues. Basic and acidic residues predominate over residues 127–138 (RSRDHFDGDPRE). The segment covering 139–155 (PAPPAYSPADFYPPPAS) has biased composition (pro residues).

It is found in the host membrane. This is an uncharacterized protein from Colorado tick fever virus (strain USA/Florio N-7180) (CTFV).